A 227-amino-acid polypeptide reads, in one-letter code: Agamous-like MADS-box protein AGL17 (227 aa).

The MADS-box domain maps to 3-57; sequence RGKIVIQKIDDSTSRQVTFSKRRKGLIKKAKELAILCDAEVCLIIFSNTDKLYDF. A K-box domain is found at 86 to 176; that stretch reads VKFWQREAET…SRKVQRIHQE (91 aa).

In terms of tissue distribution, preferentially expressed in roots.

It localises to the nucleus. Probable transcription factor. This Arabidopsis thaliana (Mouse-ear cress) protein is Agamous-like MADS-box protein AGL17 (AGL17).